The chain runs to 200 residues: Small ribosomal subunit protein uS4c (200 aa).

Residues 20 to 42 (GLTRKTTTRTSRPGQHGTQARKP) are disordered. Polar residues predominate over residues 23–37 (RKTTTRTSRPGQHGT). The region spanning 90–152 (MRLDNVIFRL…PKSQSIVKNY (63 aa)) is the S4 RNA-binding domain.

The protein belongs to the universal ribosomal protein uS4 family. In terms of assembly, part of the 30S ribosomal subunit. Contacts protein S5. The interaction surface between S4 and S5 is involved in control of translational fidelity.

Its subcellular location is the plastid. It is found in the chloroplast. Functionally, one of the primary rRNA binding proteins, it binds directly to 16S rRNA where it nucleates assembly of the body of the 30S subunit. Its function is as follows. With S5 and S12 plays an important role in translational accuracy. The sequence is that of Small ribosomal subunit protein uS4c (rps4) from Guillardia theta (Cryptophyte).